A 562-amino-acid polypeptide reads, in one-letter code: RNA N(6)-adenosine-methyltransferase METTL16 (562 aa).

An RNA-binding region spans residues 17-20 (PPDF). S-adenosyl-L-methionine is bound by residues Arg-82, Gly-110, Ser-114, Glu-133, Thr-164, and Asn-184. Residues 163–167 (KTLLM) form a K-loop region. RNA-binding stretches follow at residues 199 to 211 (SRNP…SSVN), 250 to 254 (GKKCS), and 277 to 283 (QGRTMRW). Positions 289–400 (FYDDVTVPSP…QLREVPRAPE (112 aa)) are VCR 1. Phosphoserine is present on Ser-329. The span at 402–413 (VIQALEEKKPTP) shows a compositional bias: basic and acidic residues. The interval 402 to 498 (VIQALEEKKP…DQEASEQFGS (97 aa)) is disordered. Acidic residues predominate over residues 458 to 467 (ENPEPTEDER). At Thr-463 the chain carries Phosphothreonine. Residues 480 to 496 (CQGSSNGAQDQEASEQF) show a composition bias toward polar residues. The tract at residues 514–562 (YLFKCLINVKKEVDDALVEMHWVEGQNRDLMNQLCTYIRNQIFRLVAVN) is VCR 2.

Belongs to the methyltransferase superfamily. METTL16/RlmF family. Interacts with MEPCE. Interacts with LARP7.

Its subcellular location is the nucleus. It localises to the cytoplasm. The catalysed reaction is adenosine in U6 snRNA + S-adenosyl-L-methionine = N(6)-methyladenosine in U6 snRNA + S-adenosyl-L-homocysteine + H(+). It catalyses the reaction an adenosine in mRNA + S-adenosyl-L-methionine = an N(6)-methyladenosine in mRNA + S-adenosyl-L-homocysteine + H(+). With respect to regulation, methyltransferase activity is autoinhibited by the K-loop region that blocks S-adenosyl-L-methionine-binding. Upon activation, K-loop changes conformation, allowing S-adenosyl-L-methionine-binding and subsequent methyltransferase activity. mRNA N6-adenosine-methyltransferase activity is inhibited by zinc. Its function is as follows. RNA N6-methyltransferase that methylates adenosine residues at the N(6) position of a subset of RNAs and is involved in S-adenosyl-L-methionine homeostasis by regulating expression of MAT2A transcripts. Able to N6-methylate a subset of mRNAs and U6 small nuclear RNAs (U6 snRNAs). In contrast to the METTL3-METTL14 heterodimer, only able to methylate a limited number of RNAs: requires both a 5'UACAGAGAA-3' nonamer sequence and a specific RNA structure. Plays a key role in S-adenosyl-L-methionine homeostasis by mediating N6-methylation of MAT2A mRNAs, altering splicing of MAT2A transcripts: in presence of S-adenosyl-L-methionine, binds the 3'-UTR region of MAT2A mRNA and specifically N6-methylates the first hairpin of MAT2A mRNA, preventing recognition of their 3'-splice site by U2AF1/U2AF35, thereby inhibiting splicing and protein production of S-adenosylmethionine synthase. In S-adenosyl-L-methionine-limiting conditions, binds the 3'-UTR region of MAT2A mRNA but stalls due to the lack of a methyl donor, preventing N6-methylation and promoting expression of MAT2A. In addition to mRNAs, also able to mediate N6-methylation of U6 small nuclear RNA (U6 snRNA): specifically N6-methylates adenine in position 43 of U6 snRNAs. Also able to bind various lncRNAs, such as 7SK snRNA (7SK RNA) or 7SL RNA. Specifically binds the 3'-end of the MALAT1 long non-coding RNA. The chain is RNA N(6)-adenosine-methyltransferase METTL16 from Homo sapiens (Human).